Reading from the N-terminus, the 822-residue chain is MNTADQARVGPADDGPAPSGEEEGEGGGEAGGKEPAADAAPGPSAAFRLMVTRREPAVKLQYAVSGLEPLAWSEDHRVSVSTARSIAVLELICDVHNPGQDLVIHRTSVPAPLNSCLLKVGSKTEVAECKEKFAASKDPTVSQTFMLDRVFNPEGKALPPMRGFKYTSWSPMGCDANGRCLLAALTMDNRLTIQANLNRLQWVQLVDLTEIYGERLYETSYRLSKNEAPEGNLGDFAEFQRRHSMQTPVRMEWSGICTTQQVKHNNECRDVGSVLLAVLFENGNIAVWQFQLPFVGKESISSCNTIESGITSPSVLFWWEYEHNNRKMSGLIVGSAFGPIKILPVNLKAVKGYFTLRQPVILWKEMDQLPVHSIKCVPLYHPYQKCSCSLVVAARGSYVFWCLLLISKAGLNVHNSHVTGLHSLPIVSMTADKQNGTVYTCSSDGKVRQLIPIFTDVALKFEHQLIKLSDVFGSVRTHGIAVSPCGAYLAIITTEGMINGLHPVNKNYQVQFVTLKTFEEAAAQLLESSVQNLFKQVDLIDLVRWKILKDKHIPQFLQEALEKKIESSGVTYFWRFKLFLLRILYQSMQKTPSEALWKPTHEDSKILLVDSPGMGNADDEQQEEGTSSKQVVKQGLQERSKEGDVEEPTDDSLPTTGDAGGREPMEEKLLEIQGKIEAVEMHLTREHMKRVLGEVYLHTWITENTSIPTRGLCNFLMSDEEYDDRTARVLIGHISKKMNKQTFPEHCSLCKEILPFTDRKQAVCSNGHIWLRCFLTYQSCQSLIYRRCLLHDSIARHPAPEDPDWIKRLLQSPCPFCDSPVF.

Position 1 is an N-acetylmethionine (methionine 1). Residues 1–41 are disordered; that stretch reads MNTADQARVGPADDGPAPSGEEEGEGGGEAGGKEPAADAAP. Serine 19 carries the phosphoserine modification. Lysine 225 is covalently cross-linked (Glycyl lysine isopeptide (Lys-Gly) (interchain with G-Cter in SUMO2)). Phosphoserine occurs at positions 604 and 611. The tract at residues 608–663 is disordered; sequence LVDSPGMGNADDEQQEEGTSSKQVVKQGLQERSKEGDVEEPTDDSLPTTGDAGGRE. Lysine 629 participates in a covalent cross-link: Glycyl lysine isopeptide (Lys-Gly) (interchain with G-Cter in SUMO2). Serine 652 carries the phosphoserine modification.

This sequence belongs to the TFIIIC subunit 4 family. As to quaternary structure, part of the TFIIIC subcomplex TFIIIC2, consisting of six subunits, GTF3C1, GTF3C2, GTF3C3, GTF3C4, GTF3C5 and GTF3C6. Interacts with BRF1, GTF3C1, GTF3C2, GTF3C5, GTF3C6, POLR3C and POLR3F.

It localises to the nucleus. The enzyme catalyses L-lysyl-[protein] + acetyl-CoA = N(6)-acetyl-L-lysyl-[protein] + CoA + H(+). Essential for RNA polymerase III to make a number of small nuclear and cytoplasmic RNAs, including 5S RNA, tRNA, and adenovirus-associated (VA) RNA of both cellular and viral origin. Has histone acetyltransferase activity (HAT) with unique specificity for free and nucleosomal H3. May cooperate with GTF3C5 in facilitating the recruitment of TFIIIB and RNA polymerase through direct interactions with BRF1, POLR3C and POLR3F. May be localized close to the A box. The polypeptide is General transcription factor 3C polypeptide 4 (GTF3C4) (Homo sapiens (Human)).